The chain runs to 508 residues: Photosystem II CP47 reaction center protein (508 aa).

6 consecutive transmembrane segments (helical) span residues 21-36 (SVHI…WAGS), 101-115 (IVFS…IWHW), 140-156 (GIHL…FGAF), 203-218 (IAAG…FHLS), 237-252 (VLSS…AFVV), and 457-472 (SFAL…HGAR).

This sequence belongs to the PsbB/PsbC family. PsbB subfamily. In terms of assembly, PSII is composed of 1 copy each of membrane proteins PsbA, PsbB, PsbC, PsbD, PsbE, PsbF, PsbH, PsbI, PsbJ, PsbK, PsbL, PsbM, PsbT, PsbX, PsbY, PsbZ, Psb30/Ycf12, at least 3 peripheral proteins of the oxygen-evolving complex and a large number of cofactors. It forms dimeric complexes. Binds multiple chlorophylls. PSII binds additional chlorophylls, carotenoids and specific lipids. is required as a cofactor.

It is found in the plastid. The protein localises to the chloroplast thylakoid membrane. In terms of biological role, one of the components of the core complex of photosystem II (PSII). It binds chlorophyll and helps catalyze the primary light-induced photochemical processes of PSII. PSII is a light-driven water:plastoquinone oxidoreductase, using light energy to abstract electrons from H(2)O, generating O(2) and a proton gradient subsequently used for ATP formation. The protein is Photosystem II CP47 reaction center protein of Manihot esculenta (Cassava).